The primary structure comprises 703 residues: Metastasis-associated protein MTA1 (703 aa).

The BAH domain occupies Met1–Lys164. The ELM2 domain maps to Gly165–Gly276. A Glycyl lysine isopeptide (Lys-Gly) (interchain with G-Cter in ubiquitin) cross-link involves residue Lys182. Residues Asp283–Arg335 enclose the SANT domain. Residue Ser386 is modified to Phosphoserine. Residues Cys393–Cys420 form a GATA-type; atypical zinc finger. Residues Asp437–Ser460 form a disordered region. Phosphoserine is present on Ser449. Residue Lys509 forms a Glycyl lysine isopeptide (Lys-Gly) (interchain with G-Cter in SUMO2 and SUMO3) linkage. The residue at position 522 (Ser522) is a Phosphoserine. Basic and acidic residues predominate over residues Glu542–Pro552. The disordered stretch occupies residues Glu542–Arg583. An SH3-binding motif is present at residues Pro545–Pro552. A Glycyl lysine isopeptide (Lys-Gly) (interchain with G-Cter in SUMO2) cross-link involves residue Lys549. Positions Val553 to Pro565 are enriched in low complexity. Thr564 is modified (phosphothreonine). Ser576 bears the Phosphoserine mark. The residue at position 578 (Thr578) is a Phosphothreonine. Lys614 is modified (N6-acetyllysine; alternate). A Glycyl lysine isopeptide (Lys-Gly) (interchain with G-Cter in ubiquitin); alternate cross-link involves residue Lys614. The residue at position 627 (Ser627) is a Phosphoserine. Residues Asp644–Lys674 form an interaction with RBBP4 region. Residues Ser661 to Asp703 are disordered. Positions Leu684–Pro693 match the SH3-binding motif. The SUMO interaction motif 1 (SIM); crucial for efficient sumoylation signature appears at Ile699–Asp703.

Belongs to the metastasis-associated protein family. Component of the nucleosome remodeling and deacetylase (NuRD) repressor complex, composed of core proteins MTA1, MTA2, MTA3, RBBP4, RBBP7, HDAC1, HDAC2, MBD2, MBD3, and peripherally associated proteins CDK2AP1, CDK2AP2, GATAD2A, GATAD2B, CHD3, CHD4 and CHD5. The exact stoichiometry of the NuRD complex is unknown, and some subunits such as MBD2 and MBD3, GATAD2A and GATAD2B, and CHD3, CHD4 and CHD5 define mutually exclusive NuRD complexes. Interacts with RBBP4; the interaction is direct. Interacts with BMAL1. Interacts with CLOCK. Interacts with COP1. Interacts with CSNK1G2 in the cytoplasm. Interacts with EP300. Interacts with HDAC2. Interacts with ITGB3BP/CENPR. Interacts with MBD3L2. Interacts with MDM2. Interacts with NACC2. Interacts with p53/TP53. Interacts with PIAS1. Interacts with PIAS3. Interacts with PIAS4. Interacts with PWWP2A. Interacts with PWWP2B. Interacts with SENP1. Interacts with SENP2. Interacts with SIX3; facilitates the binding of SIX3 to the core DNA motif of SIX3 promoter. Interacts with SUMO1. Interacts with SUMO2. Interacts with TFCP2L1; which is indispensable for TFCP2L1-mediated self-renewal-promoting effect and endoderm-inhibiting action. Interacts with TFAP2C. Interacts with TPR. Interacts with UBE2I/UBC9. Post-translationally, phosphorylation by CSNK1G2/CK1 triggered by estrogen enhances corepression of estrogen receptor (ER). In terms of processing, acetylation is essential for its transcriptional coactivator activity. Sumoylation positively regulates its transcriptional corepressor activity but does not affect the protein stability. Sumoylated preferentially by SUMO2 or SUMO3 than SUMO1. Sumoylation is enhanced by PIAS1/3/4 and preferentially sumoylated by SUMO2 in the presence of PIAS1/3/4. Desumoylated by SENP1. Post-translationally, ubiquitinated by COP1, which leads to proteasomal degradation. Isoform 1 abundant in testis and expressed at low levels in brain, heart, lung, liver, and kidney. Isoform 2 abundant in adrenal gland, brain, colon, heart, liver, lung, muscle, prostate, stomach, testis, and thymus and expressed at low levels in duodenum, kidney, pancreas, parotid, and spleen.

Its subcellular location is the nucleus. It is found in the nucleus envelope. The protein localises to the cytoplasm. It localises to the cytoskeleton. The protein resides in the rough endoplasmic reticulum. Its subcellular location is the golgi apparatus. It is found in the zymogen granule. Its function is as follows. Transcriptional coregulator which can act as both a transcriptional corepressor and coactivator. Acts as a component of the histone deacetylase NuRD complex which participates in the remodeling of chromatin. In the NuRD complex, regulates transcription of its targets by modifying the acetylation status of the target chromatin and cofactor accessibility to the target DNA. In conjunction with other components of NuRD, acts as a transcriptional corepressor of BRCA1, ESR1, TFF1 and CDKN1A. Acts as a transcriptional coactivator of BCAS3, and SUMO2, independent of the NuRD complex. Stimulates the expression of WNT1 by inhibiting the expression of its transcriptional corepressor SIX3. Regulates p53-dependent and -independent DNA repair processes following genotoxic stress. Regulates the stability and function of p53/TP53 by inhibiting its ubiquitination by COP1 and MDM2 thereby regulating the p53-dependent DNA repair. Plays a role in the regulation of the circadian clock and is essential for the generation and maintenance of circadian rhythms under constant light and for normal entrainment of behavior to light-dark (LD) cycles. Positively regulates the CLOCK-BMAL1 heterodimer mediated transcriptional activation of its own transcription and the transcription of CRY1. Regulates deacetylation of BMAL1 by regulating SIRT1 expression, resulting in derepressing CRY1-mediated transcription repression. With TFCP2L1, promotes establishment and maintenance of pluripotency in embryonic stem cells (ESCs) and inhibits endoderm differentiation. This chain is Metastasis-associated protein MTA1 (Mta1), found in Rattus norvegicus (Rat).